The following is a 151-amino-acid chain: FUN14 domain-containing protein 1 (151 aa).

The YXXL signature appears at 14–17 (YEVL). 3 helical membrane-spanning segments follow: residues 44 to 64 (YSVA…GFLF), 71 to 91 (AATA…GGYI), and 130 to 150 (FIKK…LGLA).

The protein belongs to the FUN14 family.

The protein resides in the mitochondrion outer membrane. Functionally, acts as an activator of hypoxia-induced mitophagy, an important mechanism for mitochondrial quality control. In Xenopus tropicalis (Western clawed frog), this protein is FUN14 domain-containing protein 1 (fundc1).